Here is a 346-residue protein sequence, read N- to C-terminus: Mannonate dehydratase (346 aa).

This sequence belongs to the mannonate dehydratase family. The cofactor is Fe(2+). It depends on Mn(2+) as a cofactor.

It catalyses the reaction D-mannonate = 2-dehydro-3-deoxy-D-gluconate + H2O. Its pathway is carbohydrate metabolism; pentose and glucuronate interconversion. Functionally, catalyzes the dehydration of D-mannonate. The sequence is that of Mannonate dehydratase from Cupriavidus taiwanensis (strain DSM 17343 / BCRC 17206 / CCUG 44338 / CIP 107171 / LMG 19424 / R1) (Ralstonia taiwanensis (strain LMG 19424)).